Consider the following 325-residue polypeptide: Biotin synthase (325 aa).

The Radical SAM core domain maps to 42 to 270; the sequence is YKVQLASLLS…QSRVRLSAGR (229 aa). Positions 57, 61, and 64 each coordinate [4Fe-4S] cluster. 4 residues coordinate [2Fe-2S] cluster: C101, C133, C193, and R265.

The protein belongs to the radical SAM superfamily. Biotin synthase family. Homodimer. Requires [4Fe-4S] cluster as cofactor. It depends on [2Fe-2S] cluster as a cofactor.

It carries out the reaction (4R,5S)-dethiobiotin + (sulfur carrier)-SH + 2 reduced [2Fe-2S]-[ferredoxin] + 2 S-adenosyl-L-methionine = (sulfur carrier)-H + biotin + 2 5'-deoxyadenosine + 2 L-methionine + 2 oxidized [2Fe-2S]-[ferredoxin]. Its pathway is cofactor biosynthesis; biotin biosynthesis; biotin from 7,8-diaminononanoate: step 2/2. In terms of biological role, catalyzes the conversion of dethiobiotin (DTB) to biotin by the insertion of a sulfur atom into dethiobiotin via a radical-based mechanism. The sequence is that of Biotin synthase from Synechococcus sp. (strain WH7803).